The chain runs to 222 residues: Glutathione S-transferase A2 (222 aa).

At Ala-2 the chain carries N-acetylalanine. The region spanning 3-83 is the GST N-terminal domain; it reads EKPKLHYSNI…YIASKYNLYG (81 aa). At Lys-4 the chain carries N6-succinyllysine. Residues Tyr-9, Arg-45, 54–55, and 67–68 contribute to the glutathione site; these read QV and QT. One can recognise a GST C-terminal domain in the interval 85-207; it reads DIKEKALIDM…LQPGSPRKPP (123 aa). Residues 199–222 are disordered; that stretch reads QPGSPRKPPMDEKSLEESRKIFRF. Residues 206-222 show a composition bias toward basic and acidic residues; that stretch reads PPMDEKSLEESRKIFRF.

It belongs to the GST superfamily. Alpha family. As to quaternary structure, homodimer or heterodimer of GSTA1 and GSTA2. In terms of tissue distribution, liver.

The protein resides in the cytoplasm. The catalysed reaction is RX + glutathione = an S-substituted glutathione + a halide anion + H(+). In terms of biological role, catalyzes the conjugation of glutathione to a large variety of electrophilic compounds. This is Glutathione S-transferase A2 (GSTA2) from Homo sapiens (Human).